Here is a 234-residue protein sequence, read N- to C-terminus: Leucyl/phenylalanyl-tRNA--protein transferase (234 aa).

The protein belongs to the L/F-transferase family.

It localises to the cytoplasm. The enzyme catalyses N-terminal L-lysyl-[protein] + L-leucyl-tRNA(Leu) = N-terminal L-leucyl-L-lysyl-[protein] + tRNA(Leu) + H(+). It catalyses the reaction N-terminal L-arginyl-[protein] + L-leucyl-tRNA(Leu) = N-terminal L-leucyl-L-arginyl-[protein] + tRNA(Leu) + H(+). It carries out the reaction L-phenylalanyl-tRNA(Phe) + an N-terminal L-alpha-aminoacyl-[protein] = an N-terminal L-phenylalanyl-L-alpha-aminoacyl-[protein] + tRNA(Phe). Functionally, functions in the N-end rule pathway of protein degradation where it conjugates Leu, Phe and, less efficiently, Met from aminoacyl-tRNAs to the N-termini of proteins containing an N-terminal arginine or lysine. The chain is Leucyl/phenylalanyl-tRNA--protein transferase from Myxococcus xanthus (strain DK1622).